The primary structure comprises 499 residues: Alpha-amylase 3 (499 aa).

Ca(2+) contacts are provided by Asn-127 and Asp-183. The active-site Nucleophile is Asp-213. His-217 provides a ligand contact to Ca(2+). The Proton donor role is filled by Glu-248.

The protein belongs to the glycosyl hydrolase 13 family. As to quaternary structure, monomer. Ca(2+) serves as cofactor.

It is found in the cytoplasm. It carries out the reaction Endohydrolysis of (1-&gt;4)-alpha-D-glucosidic linkages in polysaccharides containing three or more (1-&gt;4)-alpha-linked D-glucose units.. The polypeptide is Alpha-amylase 3 (amyC) (Dictyoglomus thermophilum (strain ATCC 35947 / DSM 3960 / H-6-12)).